Reading from the N-terminus, the 356-residue chain is D-alanine--D-alanine ligase (356 aa).

Positions 134 to 339 (KQLFEHRGLP…YPELITKLIE (206 aa)) constitute an ATP-grasp domain. 167-222 (NDKLNYPVFVKPANLGSSVGISKCNNEAELKEGIKEAFQFDRKLVIEQGVNAREIE) is a binding site for ATP. Mg(2+)-binding residues include aspartate 293, glutamate 306, and asparagine 308.

Belongs to the D-alanine--D-alanine ligase family. Mg(2+) serves as cofactor. It depends on Mn(2+) as a cofactor.

Its subcellular location is the cytoplasm. The catalysed reaction is 2 D-alanine + ATP = D-alanyl-D-alanine + ADP + phosphate + H(+). Its pathway is cell wall biogenesis; peptidoglycan biosynthesis. Functionally, cell wall formation. This chain is D-alanine--D-alanine ligase, found in Staphylococcus aureus (strain MSSA476).